Here is a 477-residue protein sequence, read N- to C-terminus: Glutamyl-tRNA reductase (477 aa).

Residues 49–52, serine 109, 114–116, and glutamine 120 each bind substrate; these read TCNR and EQQ. Cysteine 50 (nucleophile) is an active-site residue. 189–194 provides a ligand contact to NADP(+); sequence GAGAMG.

It belongs to the glutamyl-tRNA reductase family. In terms of assembly, homodimer.

The catalysed reaction is (S)-4-amino-5-oxopentanoate + tRNA(Glu) + NADP(+) = L-glutamyl-tRNA(Glu) + NADPH + H(+). Its pathway is porphyrin-containing compound metabolism; protoporphyrin-IX biosynthesis; 5-aminolevulinate from L-glutamyl-tRNA(Glu): step 1/2. In terms of biological role, catalyzes the NADPH-dependent reduction of glutamyl-tRNA(Glu) to glutamate 1-semialdehyde (GSA). In Nocardia farcinica (strain IFM 10152), this protein is Glutamyl-tRNA reductase.